The primary structure comprises 336 residues: Holliday junction branch migration complex subunit RuvB (336 aa).

Residues serine 4–tyrosine 184 are large ATPase domain (RuvB-L). ATP is bound by residues isoleucine 23, arginine 24, glycine 65, lysine 68, threonine 69, threonine 70, glutamate 131–tyrosine 133, arginine 174, tyrosine 184, and arginine 221. A Mg(2+)-binding site is contributed by threonine 69. The interval serine 185–glutamate 255 is small ATPAse domain (RuvB-S). A head domain (RuvB-H) region spans residues glutamine 258–glutamate 336. The DNA site is built by arginine 313 and arginine 318.

It belongs to the RuvB family. Homohexamer. Forms an RuvA(8)-RuvB(12)-Holliday junction (HJ) complex. HJ DNA is sandwiched between 2 RuvA tetramers; dsDNA enters through RuvA and exits via RuvB. An RuvB hexamer assembles on each DNA strand where it exits the tetramer. Each RuvB hexamer is contacted by two RuvA subunits (via domain III) on 2 adjacent RuvB subunits; this complex drives branch migration. In the full resolvosome a probable DNA-RuvA(4)-RuvB(12)-RuvC(2) complex forms which resolves the HJ.

Its subcellular location is the cytoplasm. The catalysed reaction is ATP + H2O = ADP + phosphate + H(+). Functionally, the RuvA-RuvB-RuvC complex processes Holliday junction (HJ) DNA during genetic recombination and DNA repair, while the RuvA-RuvB complex plays an important role in the rescue of blocked DNA replication forks via replication fork reversal (RFR). RuvA specifically binds to HJ cruciform DNA, conferring on it an open structure. The RuvB hexamer acts as an ATP-dependent pump, pulling dsDNA into and through the RuvAB complex. RuvB forms 2 homohexamers on either side of HJ DNA bound by 1 or 2 RuvA tetramers; 4 subunits per hexamer contact DNA at a time. Coordinated motions by a converter formed by DNA-disengaged RuvB subunits stimulates ATP hydrolysis and nucleotide exchange. Immobilization of the converter enables RuvB to convert the ATP-contained energy into a lever motion, pulling 2 nucleotides of DNA out of the RuvA tetramer per ATP hydrolyzed, thus driving DNA branch migration. The RuvB motors rotate together with the DNA substrate, which together with the progressing nucleotide cycle form the mechanistic basis for DNA recombination by continuous HJ branch migration. Branch migration allows RuvC to scan DNA until it finds its consensus sequence, where it cleaves and resolves cruciform DNA. This Legionella pneumophila (strain Paris) protein is Holliday junction branch migration complex subunit RuvB.